We begin with the raw amino-acid sequence, 147 residues long: Hemoglobin larval subunit beta-1 (147 aa).

Residues 3 to 147 (HLSADEKSAI…LVAALSHGYF (145 aa)) form the Globin domain. Heme b is bound by residues H64 and H93.

Belongs to the globin family. As to quaternary structure, heterotetramer of two alpha chains and two beta chains. In terms of tissue distribution, red blood cells.

Functionally, this is a larval (tadpole) beta-globin. This Xenopus laevis (African clawed frog) protein is Hemoglobin larval subunit beta-1.